The primary structure comprises 472 residues: tRNA-2-methylthio-N(6)-dimethylallyladenosine synthase (472 aa).

One can recognise an MTTase N-terminal domain in the interval 22–142 (RKVFVKTYGC…LPDALKRARA (121 aa)). Residues Cys31, Cys67, Cys105, Cys183, Cys187, and Cys190 each coordinate [4Fe-4S] cluster. The region spanning 169–403 (RARGVTAFLT…LLVKQQRGFA (235 aa)) is the Radical SAM core domain. Positions 404–466 (EACVGREIDL…PNSLFAEMIG (63 aa)) constitute a TRAM domain.

It belongs to the methylthiotransferase family. MiaB subfamily. In terms of assembly, monomer. [4Fe-4S] cluster is required as a cofactor.

It is found in the cytoplasm. The catalysed reaction is N(6)-dimethylallyladenosine(37) in tRNA + (sulfur carrier)-SH + AH2 + 2 S-adenosyl-L-methionine = 2-methylsulfanyl-N(6)-dimethylallyladenosine(37) in tRNA + (sulfur carrier)-H + 5'-deoxyadenosine + L-methionine + A + S-adenosyl-L-homocysteine + 2 H(+). Catalyzes the methylthiolation of N6-(dimethylallyl)adenosine (i(6)A), leading to the formation of 2-methylthio-N6-(dimethylallyl)adenosine (ms(2)i(6)A) at position 37 in tRNAs that read codons beginning with uridine. The sequence is that of tRNA-2-methylthio-N(6)-dimethylallyladenosine synthase from Rhizobium meliloti (strain 1021) (Ensifer meliloti).